Here is a 169-residue protein sequence, read N- to C-terminus: Neurotensin/neuromedin N (169 aa).

An N-terminal signal peptide occupies residues 1 to 22; sequence MRGMNLQLVCLTLLAFSSWSLC.

The protein belongs to the neurotensin family. In terms of assembly, interacts with NTSR1. Interacts with SORT1. Interacts with SORL1. Neurotensin is cleaved and degraded by Angiotensin-converting enzyme (ACE) and neprilysin (MME).

It localises to the secreted. It is found in the cytoplasmic vesicle. The protein resides in the secretory vesicle. Neurotensin may play an endocrine or paracrine role in the regulation of fat metabolism. It causes contraction of smooth muscle. This Mus musculus (Mouse) protein is Neurotensin/neuromedin N (Nts).